A 78-amino-acid chain; its full sequence is Small ribosomal subunit protein uS15c (78 aa).

This sequence belongs to the universal ribosomal protein uS15 family. Part of the 30S ribosomal subunit.

It is found in the plastid. Its subcellular location is the chloroplast. The polypeptide is Small ribosomal subunit protein uS15c (rps15-A) (Saccharum officinarum (Sugarcane)).